Here is an 883-residue protein sequence, read N- to C-terminus: Valine--tRNA ligase (883 aa).

The short motif at 46 to 56 (PNVTGKLHLGH) is the 'HIGH' region element. The 'KMSKS' region signature appears at 520–524 (KMSKS). Residue K523 coordinates ATP. The stretch at 809-844 (LVDLLNVEEELARLEKELAKWQKELDMVGKKLSNER) forms a coiled coil.

This sequence belongs to the class-I aminoacyl-tRNA synthetase family. ValS type 1 subfamily. In terms of assembly, monomer.

The protein resides in the cytoplasm. It carries out the reaction tRNA(Val) + L-valine + ATP = L-valyl-tRNA(Val) + AMP + diphosphate. Its function is as follows. Catalyzes the attachment of valine to tRNA(Val). As ValRS can inadvertently accommodate and process structurally similar amino acids such as threonine, to avoid such errors, it has a 'posttransfer' editing activity that hydrolyzes mischarged Thr-tRNA(Val) in a tRNA-dependent manner. The protein is Valine--tRNA ligase of Streptococcus pneumoniae (strain ATCC BAA-255 / R6).